The following is a 219-amino-acid chain: Probable GTP-binding protein EngB (219 aa).

The 175-residue stretch at 31–205 (VGVEIAFAGR…LAILNEWCHP (175 aa)) folds into the EngB-type G domain. GTP contacts are provided by residues 39 to 46 (GRSNAGKS), 66 to 70 (GRTQL), 84 to 87 (DLPG), 151 to 154 (TKSD), and 184 to 186 (FSS). Mg(2+)-binding residues include Ser46 and Thr68.

This sequence belongs to the TRAFAC class TrmE-Era-EngA-EngB-Septin-like GTPase superfamily. EngB GTPase family. Requires Mg(2+) as cofactor.

Its function is as follows. Necessary for normal cell division and for the maintenance of normal septation. This chain is Probable GTP-binding protein EngB, found in Shewanella baltica (strain OS223).